A 309-amino-acid polypeptide reads, in one-letter code: Porphobilinogen deaminase (309 aa).

Cys241 carries the post-translational modification S-(dipyrrolylmethanemethyl)cysteine.

It belongs to the HMBS family. Monomer. Requires dipyrromethane as cofactor.

The enzyme catalyses 4 porphobilinogen + H2O = hydroxymethylbilane + 4 NH4(+). The protein operates within porphyrin-containing compound metabolism; protoporphyrin-IX biosynthesis; coproporphyrinogen-III from 5-aminolevulinate: step 2/4. Functionally, tetrapolymerization of the monopyrrole PBG into the hydroxymethylbilane pre-uroporphyrinogen in several discrete steps. This is Porphobilinogen deaminase from Bacillus cereus (strain B4264).